The sequence spans 324 residues: Acetyl-coenzyme A carboxylase carboxyl transferase subunit alpha (324 aa).

Residues 37-291 enclose the CoA carboxyltransferase C-terminal domain; it reads ILEDKLENLE…DLMLRKTFEQ (255 aa).

Belongs to the AccA family. As to quaternary structure, acetyl-CoA carboxylase is a heterohexamer composed of biotin carboxyl carrier protein (AccB), biotin carboxylase (AccC) and two subunits each of ACCase subunit alpha (AccA) and ACCase subunit beta (AccD).

The protein localises to the cytoplasm. The catalysed reaction is N(6)-carboxybiotinyl-L-lysyl-[protein] + acetyl-CoA = N(6)-biotinyl-L-lysyl-[protein] + malonyl-CoA. It participates in lipid metabolism; malonyl-CoA biosynthesis; malonyl-CoA from acetyl-CoA: step 1/1. Component of the acetyl coenzyme A carboxylase (ACC) complex. First, biotin carboxylase catalyzes the carboxylation of biotin on its carrier protein (BCCP) and then the CO(2) group is transferred by the carboxyltransferase to acetyl-CoA to form malonyl-CoA. The sequence is that of Acetyl-coenzyme A carboxylase carboxyl transferase subunit alpha from Bacillus cereus (strain Q1).